A 345-amino-acid chain; its full sequence is Phosphoribosylformylglycinamidine cyclo-ligase (345 aa).

It belongs to the AIR synthase family.

The protein localises to the cytoplasm. The enzyme catalyses 2-formamido-N(1)-(5-O-phospho-beta-D-ribosyl)acetamidine + ATP = 5-amino-1-(5-phospho-beta-D-ribosyl)imidazole + ADP + phosphate + H(+). It participates in purine metabolism; IMP biosynthesis via de novo pathway; 5-amino-1-(5-phospho-D-ribosyl)imidazole from N(2)-formyl-N(1)-(5-phospho-D-ribosyl)glycinamide: step 2/2. The sequence is that of Phosphoribosylformylglycinamidine cyclo-ligase from Pasteurella multocida (strain Pm70).